The chain runs to 99 residues: Putative regulatory protein Kole_1849 (99 aa).

The protein belongs to the RemA family.

The polypeptide is Putative regulatory protein Kole_1849 (Kosmotoga olearia (strain ATCC BAA-1733 / DSM 21960 / TBF 19.5.1)).